The chain runs to 131 residues: Methylglyoxal synthase (131 aa).

One can recognise an MGS-like domain in the interval 1 to 131; sequence MKIALIAHDK…GDLDYRKLRK (131 aa). Substrate-binding positions include H8, K12, 34-37, and 54-55; these read TGTT and SG. D60 serves as the catalytic Proton donor/acceptor. Substrate is bound at residue H87.

It belongs to the methylglyoxal synthase family.

It catalyses the reaction dihydroxyacetone phosphate = methylglyoxal + phosphate. In terms of biological role, catalyzes the formation of methylglyoxal from dihydroxyacetone phosphate. The chain is Methylglyoxal synthase from Bacillus anthracis (strain A0248).